A 160-amino-acid chain; its full sequence is SsrA-binding protein (160 aa).

This sequence belongs to the SmpB family.

It localises to the cytoplasm. In terms of biological role, required for rescue of stalled ribosomes mediated by trans-translation. Binds to transfer-messenger RNA (tmRNA), required for stable association of tmRNA with ribosomes. tmRNA and SmpB together mimic tRNA shape, replacing the anticodon stem-loop with SmpB. tmRNA is encoded by the ssrA gene; the 2 termini fold to resemble tRNA(Ala) and it encodes a 'tag peptide', a short internal open reading frame. During trans-translation Ala-aminoacylated tmRNA acts like a tRNA, entering the A-site of stalled ribosomes, displacing the stalled mRNA. The ribosome then switches to translate the ORF on the tmRNA; the nascent peptide is terminated with the 'tag peptide' encoded by the tmRNA and targeted for degradation. The ribosome is freed to recommence translation, which seems to be the essential function of trans-translation. This chain is SsrA-binding protein, found in Mannheimia succiniciproducens (strain KCTC 0769BP / MBEL55E).